The sequence spans 485 residues: UDP-N-acetylmuramate--L-alanine ligase (485 aa).

120–126 is a binding site for ATP; it reads GSHGKTT.

The protein belongs to the MurCDEF family.

It is found in the cytoplasm. It carries out the reaction UDP-N-acetyl-alpha-D-muramate + L-alanine + ATP = UDP-N-acetyl-alpha-D-muramoyl-L-alanine + ADP + phosphate + H(+). The protein operates within cell wall biogenesis; peptidoglycan biosynthesis. Functionally, cell wall formation. The chain is UDP-N-acetylmuramate--L-alanine ligase from Rickettsia massiliae (strain Mtu5).